Consider the following 264-residue polypeptide: Small ribosomal subunit protein uS3 (264 aa).

The KH type-2 domain occupies 39 to 107 (VRDFLKKKLK…PVHVNIEEIR (69 aa)). The disordered stretch occupies residues 211 to 264 (NDAPVVEEPQDDRRRRPGRPEGRRREGEGRPGGNRRGGAGAGRRAAPGDAKSGE). A compositionally biased stretch (basic and acidic residues) spans 221–239 (DDRRRRPGRPEGRRREGEG). Positions 240–251 (RPGGNRRGGAGA) are enriched in gly residues.

The protein belongs to the universal ribosomal protein uS3 family. Part of the 30S ribosomal subunit. Forms a tight complex with proteins S10 and S14.

In terms of biological role, binds the lower part of the 30S subunit head. Binds mRNA in the 70S ribosome, positioning it for translation. This is Small ribosomal subunit protein uS3 from Cupriavidus pinatubonensis (strain JMP 134 / LMG 1197) (Cupriavidus necator (strain JMP 134)).